The chain runs to 206 residues: Probable chemoreceptor glutamine deamidase CheD 1 (206 aa).

The protein belongs to the CheD family.

The catalysed reaction is L-glutaminyl-[protein] + H2O = L-glutamyl-[protein] + NH4(+). Probably deamidates glutamine residues to glutamate on methyl-accepting chemotaxis receptors (MCPs), playing an important role in chemotaxis. This chain is Probable chemoreceptor glutamine deamidase CheD 1, found in Shewanella oneidensis (strain ATCC 700550 / JCM 31522 / CIP 106686 / LMG 19005 / NCIMB 14063 / MR-1).